A 270-amino-acid polypeptide reads, in one-letter code: 4-hydroxy-tetrahydrodipicolinate reductase (270 aa).

NAD(+) is bound by residues 11-16 (GAGGRM) and Glu-37. Arg-38 contributes to the NADP(+) binding site. Residues 101-103 (GTT) and 125-128 (APNM) each bind NAD(+). The Proton donor/acceptor role is filled by His-158. A (S)-2,3,4,5-tetrahydrodipicolinate-binding site is contributed by His-159. Lys-162 acts as the Proton donor in catalysis. (S)-2,3,4,5-tetrahydrodipicolinate is bound at residue 168-169 (GT).

This sequence belongs to the DapB family.

Its subcellular location is the cytoplasm. It carries out the reaction (S)-2,3,4,5-tetrahydrodipicolinate + NAD(+) + H2O = (2S,4S)-4-hydroxy-2,3,4,5-tetrahydrodipicolinate + NADH + H(+). The catalysed reaction is (S)-2,3,4,5-tetrahydrodipicolinate + NADP(+) + H2O = (2S,4S)-4-hydroxy-2,3,4,5-tetrahydrodipicolinate + NADPH + H(+). Its pathway is amino-acid biosynthesis; L-lysine biosynthesis via DAP pathway; (S)-tetrahydrodipicolinate from L-aspartate: step 4/4. Its function is as follows. Catalyzes the conversion of 4-hydroxy-tetrahydrodipicolinate (HTPA) to tetrahydrodipicolinate. The polypeptide is 4-hydroxy-tetrahydrodipicolinate reductase (Shewanella sp. (strain ANA-3)).